Consider the following 219-residue polypeptide: Adenylate kinase (219 aa).

Residue 10-15 participates in ATP binding; the sequence is GAGKGT. The segment at 30–59 is NMP; that stretch reads ATGDLFRANISQGTDLGKQARAYMDAGQLV. AMP contacts are provided by residues Thr-31, Arg-36, 57–59, 85–88, and Gln-92; these read QLV and GFPR. The LID stretch occupies residues 126–164; it reads GRRVCRNNSAHVFHLTYNPPKAEGVCDACGGELYQRDDD. ATP contacts are provided by residues Arg-127 and 137 to 138; that span reads VF. Positions 161 and 172 each coordinate AMP. Gly-200 is a binding site for ATP.

It belongs to the adenylate kinase family. In terms of assembly, monomer.

The protein localises to the cytoplasm. It catalyses the reaction AMP + ATP = 2 ADP. It participates in purine metabolism; AMP biosynthesis via salvage pathway; AMP from ADP: step 1/1. Its function is as follows. Catalyzes the reversible transfer of the terminal phosphate group between ATP and AMP. Plays an important role in cellular energy homeostasis and in adenine nucleotide metabolism. In Streptomyces griseus subsp. griseus (strain JCM 4626 / CBS 651.72 / NBRC 13350 / KCC S-0626 / ISP 5235), this protein is Adenylate kinase.